We begin with the raw amino-acid sequence, 401 residues long: Probable 2,3-bisphosphoglycerate-independent phosphoglycerate mutase (401 aa).

This sequence belongs to the BPG-independent phosphoglycerate mutase family. A-PGAM subfamily.

The catalysed reaction is (2R)-2-phosphoglycerate = (2R)-3-phosphoglycerate. It functions in the pathway carbohydrate degradation; glycolysis; pyruvate from D-glyceraldehyde 3-phosphate: step 3/5. Catalyzes the interconversion of 2-phosphoglycerate and 3-phosphoglycerate. This chain is Probable 2,3-bisphosphoglycerate-independent phosphoglycerate mutase, found in Thermotoga petrophila (strain ATCC BAA-488 / DSM 13995 / JCM 10881 / RKU-1).